We begin with the raw amino-acid sequence, 271 residues long: Putative two-component membrane permease complex subunit SMU_746c (271 aa).

2 helical membrane passes run 34 to 54 (LAYISMALSFILALVQLTIWM) and 70 to 90 (FFSPIILAIPVFIGLLVPTVP).

Belongs to the UPF0703 family. Interacts with SMU_747c.

Its subcellular location is the cell membrane. In terms of biological role, could be part of a two-component membrane permease system responsible for amino acid transport under low pH. Involved in acidogenesis, biofilm formation and low-pH survival. This is Putative two-component membrane permease complex subunit SMU_746c from Streptococcus mutans serotype c (strain ATCC 700610 / UA159).